The primary structure comprises 130 residues: Small ribosomal subunit protein uS9 (130 aa).

The protein belongs to the universal ribosomal protein uS9 family. In terms of assembly, part of the 30S ribosomal subunit.

This chain is Small ribosomal subunit protein uS9 (rpsI), found in Bacillus subtilis (strain 168).